The following is a 238-amino-acid chain: Probable transcriptional regulatory protein SMU_1789c (238 aa).

It belongs to the TACO1 family. YeeN subfamily.

Its subcellular location is the cytoplasm. The sequence is that of Probable transcriptional regulatory protein SMU_1789c from Streptococcus mutans serotype c (strain ATCC 700610 / UA159).